Here is a 343-residue protein sequence, read N- to C-terminus: Aspartate carbamoyltransferase catalytic subunit (343 aa).

Carbamoyl phosphate is bound by residues R91 and T92. Position 119 (K119) interacts with L-aspartate. Residues R141, H171, and Q174 each coordinate carbamoyl phosphate. L-aspartate-binding residues include R204 and R259. Residues G300 and P301 each contribute to the carbamoyl phosphate site.

The protein belongs to the aspartate/ornithine carbamoyltransferase superfamily. ATCase family. Heterododecamer (2C3:3R2) of six catalytic PyrB chains organized as two trimers (C3), and six regulatory PyrI chains organized as three dimers (R2).

The enzyme catalyses carbamoyl phosphate + L-aspartate = N-carbamoyl-L-aspartate + phosphate + H(+). It participates in pyrimidine metabolism; UMP biosynthesis via de novo pathway; (S)-dihydroorotate from bicarbonate: step 2/3. In terms of biological role, catalyzes the condensation of carbamoyl phosphate and aspartate to form carbamoyl aspartate and inorganic phosphate, the committed step in the de novo pyrimidine nucleotide biosynthesis pathway. The chain is Aspartate carbamoyltransferase catalytic subunit from Burkholderia ambifaria (strain MC40-6).